A 183-amino-acid chain; its full sequence is Dual-action ribosomal maturation protein DarP (183 aa).

The protein belongs to the DarP family.

The protein localises to the cytoplasm. Functionally, member of a network of 50S ribosomal subunit biogenesis factors which assembles along the 30S-50S interface, preventing incorrect 23S rRNA structures from forming. Promotes peptidyl transferase center (PTC) maturation. This Shigella flexneri serotype 5b (strain 8401) protein is Dual-action ribosomal maturation protein DarP.